Reading from the N-terminus, the 175-residue chain is Microfibril-associated glycoprotein 3 (175 aa).

The Cytoplasmic segment spans residues 1 to 175 (FRTEGAEKLQ…KDGSFESCQL (175 aa)). Positions 85-175 (KERPALNAQD…KDGSFESCQL (91 aa)) are disordered. The segment covering 145 to 175 (QDSSHFSPPDDTGSTESNSNYKDGSFESCQL) has biased composition (polar residues).

Post-translationally, glycosylated.

It is found in the cell membrane. Component of the elastin-associated microfibrils. The sequence is that of Microfibril-associated glycoprotein 3 (MFAP3) from Bos taurus (Bovine).